The chain runs to 320 residues: Delta-aminolevulinic acid dehydratase (320 aa).

The Zn(2+) site is built by C119, C121, and C129. K194 functions as the Schiff-base intermediate with substrate in the catalytic mechanism. 5-aminolevulinate is bound by residues R204 and R216. E232 serves as a coordination point for Mg(2+). K247 acts as the Schiff-base intermediate with substrate in catalysis. 5-aminolevulinate is bound at residue S273.

This sequence belongs to the ALAD family. As to quaternary structure, homooctamer. It depends on Zn(2+) as a cofactor.

The catalysed reaction is 2 5-aminolevulinate = porphobilinogen + 2 H2O + H(+). It participates in porphyrin-containing compound metabolism; protoporphyrin-IX biosynthesis; coproporphyrinogen-III from 5-aminolevulinate: step 1/4. Its function is as follows. Catalyzes an early step in the biosynthesis of tetrapyrroles. Binds two molecules of 5-aminolevulinate per subunit, each at a distinct site, and catalyzes their condensation to form porphobilinogen. This chain is Delta-aminolevulinic acid dehydratase (hemB), found in Methanothermus sociabilis.